Here is a 256-residue protein sequence, read N- to C-terminus: Nuclear shuttle protein (256 aa).

Positions 21 to 42 match the Bipartite nuclear localization signal motif; sequence NSLIRQQSLFKRNVSKRRPFQT. Residues 81-96 carry the Nuclear localization signal motif; it reads DIAKSLPNRTRSYIKL. An interaction with Arabidopsis thaliana NSI protein region spans residues 150-187; the sequence is ELFGARIHSHGNLAIVPSLKDRFYIRHVLKRVISVEKD.

Belongs to the begomovirus nuclear shuttle protein family. In terms of assembly, binds to single-stranded and double-stranded viral DNA. Interacts with the host nuclear shuttle interacting (NSI) protein. This interaction may allow NSP to recruit NSI monomers to the viral genome and thus regulate nuclear export of viral genome by NSP.

It is found in the host nucleus. The protein localises to the host cytoplasm. The protein resides in the host cell membrane. In terms of biological role, binds to the genomic viral ssDNA, shuttles it into and out of the cell nucleus. Begomoviruses use 2 proteins to transport their DNA from cell to cell. The nuclear shuttle protein (NSP) shuttles it between nucleus and cytoplasm and the movement protein (MP) probably transports the DNA-NSP complex to the cell periphery and facilitates movement across the cell wall. The polypeptide is Nuclear shuttle protein (Potato yellow mosaic virus (isolate Venezuela) (PYMV)).